A 374-amino-acid chain; its full sequence is Pulmonary surfactant-associated protein D (374 aa).

The N-terminal stretch at 1–19 (MLHFLSMLVLLVQPLGDLG) is a signal peptide. 2 positions are modified to S-nitrosocysteine: Cys-34 and Cys-39. The interval 40-221 (SPTENGLPGR…RGIKGESGLP (182 aa)) is disordered. The Collagen-like domain maps to 45 to 221 (GLPGRDGRDG…RGIKGESGLP (177 aa)). The segment covering 49 to 64 (RDGRDGREGPRGEKGD) has biased composition (basic and acidic residues). Pro-77 carries the post-translational modification Hydroxyproline. Lys-86 is subject to 5-hydroxylysine. Asn-89 carries N-linked (GlcNAc...) asparagine glycosylation. Pro-95 carries the hydroxyproline modification. Lys-98 is subject to 5-hydroxylysine. Phosphoserine is present on Ser-109. Composition is skewed to low complexity over residues 137–163 (KGEAGPKGEVGAPGMQGSAGAKGPAGP) and 170–200 (PGEQGAPGNAGAAGPAGPAGPQGAPGSRGPP). Pro-170 and Pro-176 each carry hydroxyproline. The span at 203–215 (KGDRGAPGDRGIK) shows a compositional bias: basic and acidic residues. A coiled-coil region spans residues 222–253 (DSAALRQQMEALNGKLQRLEAAFSRYKKAALF). One can recognise a C-type lectin domain in the interval 259-374 (VGDKIFRAAN…GEQRLVICEF (116 aa)). Cystine bridges form between Cys-280/Cys-372 and Cys-350/Cys-364.

It belongs to the SFTPD family. As to quaternary structure, oligomeric complex of 4 set of homotrimers. In terms of processing, S-nitrosylation at Cys-34 and Cys-39 alters the quaternary structure which results in a pro-inflammatory chemoattractive signaling activity with macrophages.

The protein resides in the secreted. It is found in the extracellular space. It localises to the extracellular matrix. Its subcellular location is the surface film. Functionally, contributes to the lung's defense against inhaled microorganisms, organic antigens and toxins. Interacts with compounds such as bacterial lipopolysaccharides, oligosaccharides and fatty acids and modulates leukocyte action in immune response. May participate in the extracellular reorganization or turnover of pulmonary surfactant. Binds strongly maltose residues and to a lesser extent other alpha-glucosyl moieties. The sequence is that of Pulmonary surfactant-associated protein D (Sftpd) from Rattus norvegicus (Rat).